The following is a 346-amino-acid chain: MSGEDEFYLFQNISSVGPWDGPQYHIAPVWAFHLQAAFMGFVFFAGTPLNATVLVATLHYKKLRQPLNYILVNVSLGGFLFCIFSVFTVFIASCHGYFLFGRHVCALEAFLGSVAGLVTGWSLAFLAFERYLVICKPFGNIRFNSKHALTVVLITWTIGIGVSIPPFFGWSRFIPEGLQCSCGPDWYTVGTKYRSEHYTWFLFIFCFIIPLSLICFSYFQLLRTLRAVAAQQQESATTQKAEREVSHMVVVMVGSFCLCYVPYAALAMYMVNNRNHGLYLRLVTIPAFFSKSSCVYNPIIYCFMNKQFRACILEMVCRKPMTDESDMSGSQKTEVSTVSSSKVGPH.

Over 1–31 the chain is Extracellular; the sequence is MSGEDEFYLFQNISSVGPWDGPQYHIAPVWA. Residue N12 is glycosylated (N-linked (GlcNAc...) asparagine). The helical transmembrane segment at 32-56 threads the bilayer; it reads FHLQAAFMGFVFFAGTPLNATVLVA. Residues 57–68 lie on the Cytoplasmic side of the membrane; it reads TLHYKKLRQPLN. A helical transmembrane segment spans residues 69 to 94; it reads YILVNVSLGGFLFCIFSVFTVFIASC. At 95–108 the chain is on the extracellular side; sequence HGYFLFGRHVCALE. C105 and C182 are disulfide-bonded. A helical transmembrane segment spans residues 109–128; sequence AFLGSVAGLVTGWSLAFLAF. Residues 129 to 147 are Cytoplasmic-facing; sequence ERYLVICKPFGNIRFNSKH. Residues 148–171 traverse the membrane as a helical segment; it reads ALTVVLITWTIGIGVSIPPFFGWS. At 172–197 the chain is on the extracellular side; that stretch reads RFIPEGLQCSCGPDWYTVGTKYRSEH. A helical transmembrane segment spans residues 198-225; that stretch reads YTWFLFIFCFIIPLSLICFSYFQLLRTL. The Cytoplasmic segment spans residues 226 to 247; that stretch reads RAVAAQQQESATTQKAEREVSH. The chain crosses the membrane as a helical span at residues 248 to 271; sequence MVVVMVGSFCLCYVPYAALAMYMV. Over 272–279 the chain is Extracellular; that stretch reads NNRNHGLY. A helical transmembrane segment spans residues 280 to 304; that stretch reads LRLVTIPAFFSKSSCVYNPIIYCFM. K291 is modified (N6-(retinylidene)lysine). At 305–346 the chain is on the cytoplasmic side; it reads NKQFRACILEMVCRKPMTDESDMSGSQKTEVSTVSSSKVGPH. The disordered stretch occupies residues 322 to 346; it reads TDESDMSGSQKTEVSTVSSSKVGPH. The segment covering 330–346 has biased composition (low complexity); it reads SQKTEVSTVSSSKVGPH.

Belongs to the G-protein coupled receptor 1 family. Opsin subfamily. In terms of processing, phosphorylated on some or all of the serine and threonine residues present in the C-terminal region. In terms of tissue distribution, expressed in cone photoreceptor cells.

Its subcellular location is the cell membrane. The protein resides in the photoreceptor inner segment. It localises to the cell projection. The protein localises to the cilium. It is found in the photoreceptor outer segment. Its subcellular location is the cytoplasm. The protein resides in the perinuclear region. Visual pigments are the light-absorbing molecules that mediate vision. They consist of an apoprotein, opsin, covalently linked to cis-retinal. Required for the maintenance of cone outer segment organization in the ventral retina, but not essential for the maintenance of functioning cone photoreceptors. Involved in ensuring correct abundance and localization of retinal membrane proteins. May increase spectral sensitivity in dim light. This Rattus norvegicus (Rat) protein is Short-wave-sensitive opsin 1 (Opn1sw).